A 129-amino-acid polypeptide reads, in one-letter code: Ribonuclease VapC12 (129 aa).

2 residues coordinate Mg(2+): Asp-5 and Asp-94.

Belongs to the PINc/VapC protein family. Mg(2+) is required as a cofactor.

Its function is as follows. Toxic component of a type II toxin-antitoxin (TA) system. An RNase. The cognate antitoxin is VapB12. The polypeptide is Ribonuclease VapC12 (Mycobacterium tuberculosis (strain CDC 1551 / Oshkosh)).